Reading from the N-terminus, the 624-residue chain is Forkhead box protein O1 (624 aa).

Disordered regions lie at residues 1-62 (MAEA…PSAS) and 94-128 (APLS…SRRN). Threonine 24 bears the Phosphothreonine; by PKB/AKT1 or PKB/AKT2 and SGK1 mark. 2 stretches are compositionally biased toward low complexity: residues 37–62 (SATS…PSAS) and 105–119 (AAAA…AGQP). Positions 130–224 (WGNLSYADLI…KSGKSPRRRA (95 aa)) form a DNA-binding region, fork-head. DNA-binding regions lie at residues 181–188 (NSIRHNLS) and 204–207 (SSWW). Serine 182 bears the Phosphoserine; by STK4/MST1 mark. Residues serine 188, serine 204, and serine 205 each carry the phosphoserine modification. Residues 204 to 306 (SSWWMLNPEG…RLSPIMTEQD (103 aa)) are disordered. Lysine 215 and lysine 218 each carry N6-acetyllysine. Phosphoserine; by CDK1 is present on serine 219. Omega-N-methylarginine; by PRMT1 is present on residues arginine 221 and arginine 223. The Nuclear localization signal motif lies at 221-223 (RRR). Serine 226 carries the phosphoserine; by PKB/AKT1 and SGK1 modification. Lysine 232, lysine 235, and lysine 244 each carry N6-acetyllysine. A compositionally biased stretch (basic residues) spans 234–245 (AKSRGRAAKKKA). The interval 253 to 532 (GAGDSPGSQF…RLAPVKTALQ (280 aa)) is sufficient for interaction with NLK. Phosphoserine is present on residues serine 257 and serine 268. Residues 279–296 (NWSTFRPRTSSNASTISG) show a composition bias toward polar residues. At serine 289 the chain carries Phosphoserine; by PKB/AKT1. Serine 292 is modified (phosphoserine; by CK1 and SGK1). Serine 295 is subject to Phosphoserine; by CK1. Serine 299 carries the phosphoserine; by DYRK1A modification. At threonine 303 the chain carries Phosphothreonine. Positions 333–428 (SEISNPENME…YGGMSQYCAP (96 aa)) are required for interaction with RUNX2. At lysine 393 the chain carries N6-acetyllysine. A Required for interaction with SIRT1 motif is present at residues 431 to 435 (LKELL).

In terms of assembly, interacts with LRPPRC. Interacts with RUNX2; the interaction inhibits RUNX2 transcriptional activity and mediates the IGF1/insulin-dependent BGLAP expression in osteoblasts Interacts with PPP2R1A; the interaction regulates the dephosphorylation of FOXO1 at Thr-24 and Ser-263 leading to its nuclear import. Interacts with NLK. Interacts with SIRT1; the interaction results in the deacetylation of FOXO1 leading to activation of FOXO1-mediated transcription of genes involved in DNA repair and stress resistance. Binds to CDK1. Interacts with the 14-3-3 proteins, YWHAG and YWHAZ; the interactions require insulin-stimulated phosphorylation on Thr-24, promote nuclear exit and loss of transcriptional activity. Interacts with SKP2; the interaction ubiquitinates FOXO1 leading to its proteasomal degradation. The interaction requires the presence of KRIT1. Interacts (via the C-terminal half) with ATF4 (via its DNA binding domain); the interaction occurs in osteoblasts, regulates glucose homeostasis via suppression of beta-cell proliferation and subsequent decrease in insulin production. Interacts with PRMT1; the interaction methylates FOXO1, prevents PKB/AKT1 phosphorylation and retains FOXO1 in the nucleus. Interacts with EP300 and CREBBP; the interactions acetylate FOXO1. Interacts with SIRT2; the interaction is disrupted in response to oxidative stress or serum deprivation, leading to increased level of acetylated FOXO1, which promotes stress-induced autophagy by stimulating E1-like activating enzyme ATG7. Interacts (acetylated form) with ATG7; the interaction is increased in response to oxidative stress or serum deprivation and promotes the autophagic process leading to cell death. Interacts (acetylated form) with PPARG. Interacts with XBP1; this interaction is direct and leads to FOXO1 ubiquitination and degradation via the proteasome pathway. Interacts (via the Fork-head domain) with CEBPA; the interaction increases when FOXO1 is deacetylated. Interacts with WDFY2. Forms a complex with WDFY2 and AKT1. Interacts with CRY1. Interacts with PPIA/CYPA; the interaction promotes FOXO1 dephosphorylation, nuclear accumulation and transcriptional activity. Interacts with TOX4; FOXO1 is required for full induction of TOX4-dependent activity and the interaction is inhibited by insulin. Interacts (when phosphorylated on Ser-226) with STUB1/CHIP. In terms of processing, phosphorylation by NLK promotes nuclear export and inhibits the transcriptional activity. In response to growth factors, phosphorylation on Thr-24, Ser-226 and Ser-292 by PKB/AKT1 promotes nuclear export and inactivation of transactivational activity. Phosphorylation on Thr-24 is required for binding 14-3-3 proteins. Phosphorylation of Ser-226 decreases DNA-binding activity and promotes the phosphorylation of Thr-24 and Ser-289, permitting phosphorylation of Ser-292 and Ser-295, probably by CDK1, leading to nuclear exclusion and loss of function. Stress signals, such as response to oxygen or nitric oxide, attenuate the PKB/AKT1-mediated phosphorylation leading to nuclear retention. Phosphorylation of Ser-299 is independent of IGF1 and leads to reduced function. Dephosphorylated on Thr-24 and Ser-226 by PP2A in beta-cells under oxidative stress leading to nuclear retention. Phosphorylation of Ser-219 by CDK1 disrupts binding of 14-3-3 proteins leading to nuclear accumulation and has no effect on DNA binding nor transcriptional activity. Phosphorylation by STK4/MST1 on Ser-182, upon oxidative stress, inhibits binding to 14-3-3 proteins and nuclear export. PPIA/CYPA promotes its dephosphorylation on Ser-226. Post-translationally, ubiquitinated by SKP2. Ubiquitination leads to proteasomal degradation. Ubiquitinated by STUB1/CHIP; when Ser-226 is phosphorylated. Methylation inhibits AKT1-mediated phosphorylation at Ser-226 and is increased by oxidative stress. In terms of processing, acetylated. Acetylation at Lys-232 and Lys-244 are necessary for autophagic cell death induction. Deacetylated by SIRT2 in response to oxidative stress or serum deprivation, thereby negatively regulating FOXO1-mediated autophagic cell death. Once in the nucleus, acetylated by CREBBP/EP300. Acetylation diminishes the interaction with target DNA and attenuates the transcriptional activity. It increases the phosphorylation at Ser-226. Deacetylation by SIRT1 results in reactivation of the transcriptional activity. Oxidative stress by hydrogen peroxide treatment appears to promote deacetylation and uncoupling of insulin-induced phosphorylation. By contrast, resveratrol acts independently of acetylation. Acetylated at Lys-393, promoting its localization to the nucleus and transcription factor activity. Deacetylation at Lys-393 by SIRT6, promotes its translocation into the cytoplasm, preventing its transcription factor activity. Deacetylation and subsequent inhibition by SIRT6 has different effects depending on cell types: it inhibits gluconeogenesis in hepatocytes, promotes glucose sensing in pancreatic beta-cells and regulates lipid catabolism in brown adipocytes.

It localises to the cytoplasm. The protein localises to the nucleus. Transcription factor that is the main target of insulin signaling and regulates metabolic homeostasis in response to oxidative stress. Binds to the insulin response element (IRE) with consensus sequence 5'-TT[G/A]TTTTG-3' and the related Daf-16 family binding element (DBE) with consensus sequence 5'-TT[G/A]TTTAC-3'. Activity suppressed by insulin. Main regulator of redox balance and osteoblast numbers and controls bone mass. Orchestrates the endocrine function of the skeleton in regulating glucose metabolism. Also acts as a key regulator of chondrogenic commitment of skeletal progenitor cells in response to lipid availability: when lipids levels are low, translocates to the nucleus and promotes expression of SOX9, which induces chondrogenic commitment and suppresses fatty acid oxidation. Acts synergistically with ATF4 to suppress osteocalcin/BGLAP activity, increasing glucose levels and triggering glucose intolerance and insulin insensitivity. Also suppresses the transcriptional activity of RUNX2, an upstream activator of osteocalcin/BGLAP. Acts as an inhibitor of glucose sensing in pancreatic beta cells by acting as a transcription repressor and suppressing expression of PDX1. In hepatocytes, promotes gluconeogenesis by acting together with PPARGC1A and CEBPA to activate the expression of genes such as IGFBP1, G6PC1 and PCK1. Also promotes gluconeogenesis by directly promoting expression of PPARGC1A and G6PC1. Important regulator of cell death acting downstream of CDK1, PKB/AKT1 and STK4/MST1. Promotes neural cell death. Mediates insulin action on adipose tissue. Regulates the expression of adipogenic genes such as PPARG during preadipocyte differentiation and, adipocyte size and adipose tissue-specific gene expression in response to excessive calorie intake. Regulates the transcriptional activity of GADD45A and repair of nitric oxide-damaged DNA in beta-cells. Required for the autophagic cell death induction in response to starvation or oxidative stress in a transcription-independent manner. Mediates the function of MLIP in cardiomyocytes hypertrophy and cardiac remodeling. Positive regulator of apoptosis in cardiac smooth muscle cells as a result of its transcriptional activation of pro-apoptotic genes. Regulates endothelial cell (EC) viability and apoptosis in a PPIA/CYPA-dependent manner via transcription of CCL2 and BCL2L11 which are involved in EC chemotaxis and apoptosis. The chain is Forkhead box protein O1 (FOXO1) from Bos taurus (Bovine).